The chain runs to 105 residues: Met repressor (105 aa).

It belongs to the MetJ family. As to quaternary structure, homodimer.

It is found in the cytoplasm. In terms of biological role, this regulatory protein, when combined with SAM (S-adenosylmethionine) represses the expression of the methionine regulon and of enzymes involved in SAM synthesis. The sequence is that of Met repressor from Pectobacterium carotovorum subsp. carotovorum (strain PC1).